A 347-amino-acid polypeptide reads, in one-letter code: Phosphoribosylformylglycinamidine cyclo-ligase (347 aa).

This sequence belongs to the AIR synthase family.

The protein resides in the cytoplasm. It carries out the reaction 2-formamido-N(1)-(5-O-phospho-beta-D-ribosyl)acetamidine + ATP = 5-amino-1-(5-phospho-beta-D-ribosyl)imidazole + ADP + phosphate + H(+). It participates in purine metabolism; IMP biosynthesis via de novo pathway; 5-amino-1-(5-phospho-D-ribosyl)imidazole from N(2)-formyl-N(1)-(5-phospho-D-ribosyl)glycinamide: step 2/2. This is Phosphoribosylformylglycinamidine cyclo-ligase from Yersinia pseudotuberculosis serotype O:1b (strain IP 31758).